The sequence spans 204 residues: Ras-related protein Rab-1D (204 aa).

GTP-binding positions include Gly17–Cys25, Trp35–Thr42, Asp65–Gln69, Asn123–Asp126, and Ser153–Lys155. Residues His39–Phe47 carry the Effector region motif. A compositionally biased stretch (basic and acidic residues) spans Pro182–Ser191. Residues Pro182–Cys204 form a disordered region. Positions Lys192–Cys204 are enriched in basic residues. Residue Cys204 is the site of S-geranylgeranyl cysteine attachment.

This sequence belongs to the small GTPase superfamily. Rab family.

The protein localises to the cell membrane. The polypeptide is Ras-related protein Rab-1D (rab1D) (Dictyostelium discoideum (Social amoeba)).